A 599-amino-acid chain; its full sequence is Kelch-like protein 24a (599 aa).

A BTB domain is found at T65–T132. In terms of domain architecture, BACK spans C167 to E269. 6 Kelch repeats span residues V313–N362, I364–G406, K407–G453, L455–H501, I503–G543, and I545–R591.

As to quaternary structure, forms homodimers. Component of the BCR(KLHL24) E3 ubiquitin ligase complex.

The protein localises to the perikaryon. It localises to the cell projection. Its subcellular location is the axon. The protein resides in the cytoplasm. It is found in the cell junction. The protein localises to the desmosome. It localises to the adherens junction. In terms of biological role, necessary to maintain the balance between intermediate filament stability and degradation, a process that is essential for skin integrity. Reduces kainate receptor-mediated currents in brain neurons, most probably by modulating channel properties. It is required for proper heart development. The protein is Kelch-like protein 24a of Danio rerio (Zebrafish).